We begin with the raw amino-acid sequence, 108 residues long: Probable 4-amino-4-deoxy-L-arabinose-phosphoundecaprenol flippase subunit ArnE (108 aa).

3 helical membrane passes run 32–52 (PLLL…LVWL), 58–78 (VPVG…TLAA), and 85–105 (TLSL…AIMG). Positions 34–106 (LLWLGGSVLL…IVAGVAIMGS (73 aa)) constitute an EamA domain.

Belongs to the ArnE family. Heterodimer of ArnE and ArnF.

It localises to the cell inner membrane. Its pathway is bacterial outer membrane biogenesis; lipopolysaccharide biosynthesis. Functionally, translocates 4-amino-4-deoxy-L-arabinose-phosphoundecaprenol (alpha-L-Ara4N-phosphoundecaprenol) from the cytoplasmic to the periplasmic side of the inner membrane. This chain is Probable 4-amino-4-deoxy-L-arabinose-phosphoundecaprenol flippase subunit ArnE, found in Erwinia tasmaniensis (strain DSM 17950 / CFBP 7177 / CIP 109463 / NCPPB 4357 / Et1/99).